A 180-amino-acid polypeptide reads, in one-letter code: Chromosome-anchoring protein RacA (180 aa).

Residues 5–25 constitute a DNA-binding region (H-T-H motif); the sequence is TPFIAKKLGVSPKAVVRIAQQ. Residues 89–151 adopt a coiled-coil conformation; that stretch reads SHDFEQLTAQ…LEATLKKEEP (63 aa).

This sequence belongs to the RacA family.

Its subcellular location is the cytoplasm. Its function is as follows. Required for the formation of axial filaments and for anchoring the origin regions at the cell poles in sporulating cells, thus ensuring proper chromosome segregation in the prespore. Binds in a dispersed manner throughout the chromosome but preferentially to sites clustered in the origin portion of the chromosome, causing condensation of the chromosome and its remodeling into an elongated, anchored structure. The chain is Chromosome-anchoring protein RacA from Bacillus cereus (strain ATCC 10987 / NRS 248).